A 267-amino-acid chain; its full sequence is Ribosomal RNA small subunit methyltransferase A (267 aa).

Asn18, Leu20, Gly45, Glu66, Asp91, and Asn112 together coordinate S-adenosyl-L-methionine.

The protein belongs to the class I-like SAM-binding methyltransferase superfamily. rRNA adenine N(6)-methyltransferase family. RsmA subfamily.

Its subcellular location is the cytoplasm. The enzyme catalyses adenosine(1518)/adenosine(1519) in 16S rRNA + 4 S-adenosyl-L-methionine = N(6)-dimethyladenosine(1518)/N(6)-dimethyladenosine(1519) in 16S rRNA + 4 S-adenosyl-L-homocysteine + 4 H(+). Specifically dimethylates two adjacent adenosines (A1518 and A1519) in the loop of a conserved hairpin near the 3'-end of 16S rRNA in the 30S particle. May play a critical role in biogenesis of 30S subunits. The chain is Ribosomal RNA small subunit methyltransferase A from Shewanella denitrificans (strain OS217 / ATCC BAA-1090 / DSM 15013).